We begin with the raw amino-acid sequence, 192 residues long: Glycerol-3-phosphate acyltransferase (192 aa).

The next 5 membrane-spanning stretches (helical) occupy residues 4–24 (MFWL…AILL), 54–74 (LAIL…LIAS), 80–100 (IAQQ…PVYF), 112–132 (AGVL…AWLL), and 154–174 (LLAW…LLIV).

Belongs to the PlsY family. In terms of assembly, probably interacts with PlsX.

It is found in the cell inner membrane. The catalysed reaction is an acyl phosphate + sn-glycerol 3-phosphate = a 1-acyl-sn-glycero-3-phosphate + phosphate. The protein operates within lipid metabolism; phospholipid metabolism. Catalyzes the transfer of an acyl group from acyl-phosphate (acyl-PO(4)) to glycerol-3-phosphate (G3P) to form lysophosphatidic acid (LPA). This enzyme utilizes acyl-phosphate as fatty acyl donor, but not acyl-CoA or acyl-ACP. In Pseudomonas syringae pv. syringae (strain B728a), this protein is Glycerol-3-phosphate acyltransferase.